We begin with the raw amino-acid sequence, 187 residues long: Large ribosomal subunit protein bL17 (187 aa).

The tract at residues 122–187 (PKVRSSRTST…EADAAEKSDK (66 aa)) is disordered. Low complexity predominate over residues 127-144 (SRTSTATAPAAAAPAAEA). 2 stretches are compositionally biased toward acidic residues: residues 145–157 (PAEE…EETD) and 165–180 (TPAE…VEAD).

This sequence belongs to the bacterial ribosomal protein bL17 family. Part of the 50S ribosomal subunit. Contacts protein L32.

The polypeptide is Large ribosomal subunit protein bL17 (Clavibacter michiganensis subsp. michiganensis (strain NCPPB 382)).